Consider the following 213-residue polypeptide: UPF0056 membrane protein AF_2111 (213 aa).

The next 6 helical transmembrane spans lie at 1 to 21 (MDIA…FIII), 51 to 71 (IIAF…LDYF), 75 to 95 (ISSL…DILL), 118 to 138 (VFPL…GIVL), 142 to 162 (AGDV…YSIV), and 181 to 201 (ADIA…EFVF).

The protein belongs to the UPF0056 (MarC) family.

The protein resides in the cell membrane. The protein is UPF0056 membrane protein AF_2111 of Archaeoglobus fulgidus (strain ATCC 49558 / DSM 4304 / JCM 9628 / NBRC 100126 / VC-16).